The primary structure comprises 458 residues: Bifunctional protein GlmU (458 aa).

Residues 1–229 (MNKFAIVLAA…FDESLGVNDR (229 aa)) form a pyrophosphorylase region. UDP-N-acetyl-alpha-D-glucosamine-binding positions include 8–11 (LAAG), Lys-22, Gln-72, and 77–78 (GT). Asp-102 contacts Mg(2+). Residues Gly-139, Glu-154, Asn-169, and Asn-227 each coordinate UDP-N-acetyl-alpha-D-glucosamine. Asn-227 is a binding site for Mg(2+). The tract at residues 230 to 250 (VALSQAELTMRKRINHQHMVN) is linker. Positions 251-458 (GVTLIDPATT…AKKMPHYRGQ (208 aa)) are N-acetyltransferase. UDP-N-acetyl-alpha-D-glucosamine is bound by residues Arg-332 and Lys-350. The active-site Proton acceptor is the His-362. The UDP-N-acetyl-alpha-D-glucosamine site is built by Tyr-365 and Asn-376. The acetyl-CoA site is built by Ala-379, Ser-404, Ala-422, and Arg-439.

This sequence in the N-terminal section; belongs to the N-acetylglucosamine-1-phosphate uridyltransferase family. In the C-terminal section; belongs to the transferase hexapeptide repeat family. Homotrimer. It depends on Mg(2+) as a cofactor.

Its subcellular location is the cytoplasm. It catalyses the reaction alpha-D-glucosamine 1-phosphate + acetyl-CoA = N-acetyl-alpha-D-glucosamine 1-phosphate + CoA + H(+). It carries out the reaction N-acetyl-alpha-D-glucosamine 1-phosphate + UTP + H(+) = UDP-N-acetyl-alpha-D-glucosamine + diphosphate. It participates in nucleotide-sugar biosynthesis; UDP-N-acetyl-alpha-D-glucosamine biosynthesis; N-acetyl-alpha-D-glucosamine 1-phosphate from alpha-D-glucosamine 6-phosphate (route II): step 2/2. The protein operates within nucleotide-sugar biosynthesis; UDP-N-acetyl-alpha-D-glucosamine biosynthesis; UDP-N-acetyl-alpha-D-glucosamine from N-acetyl-alpha-D-glucosamine 1-phosphate: step 1/1. Its pathway is bacterial outer membrane biogenesis; LPS lipid A biosynthesis. Functionally, catalyzes the last two sequential reactions in the de novo biosynthetic pathway for UDP-N-acetylglucosamine (UDP-GlcNAc). The C-terminal domain catalyzes the transfer of acetyl group from acetyl coenzyme A to glucosamine-1-phosphate (GlcN-1-P) to produce N-acetylglucosamine-1-phosphate (GlcNAc-1-P), which is converted into UDP-GlcNAc by the transfer of uridine 5-monophosphate (from uridine 5-triphosphate), a reaction catalyzed by the N-terminal domain. The chain is Bifunctional protein GlmU from Lactococcus lactis subsp. lactis (strain IL1403) (Streptococcus lactis).